Here is a 158-residue protein sequence, read N- to C-terminus: Succinate dehydrogenase assembly factor 2, mitochondrial (158 aa).

Residues 1-17 (MFSANIARKVVCSVCRA) constitute a mitochondrion transit peptide.

This sequence belongs to the SDHAF2 family. As to quaternary structure, interacts with sdha within the SDH catalytic dimer.

The protein resides in the mitochondrion matrix. Functionally, plays an essential role in the assembly of succinate dehydrogenase (SDH), an enzyme complex (also referred to as respiratory complex II) that is a component of both the tricarboxylic acid (TCA) cycle and the mitochondrial electron transport chain, and which couples the oxidation of succinate to fumarate with the reduction of ubiquinone (coenzyme Q) to ubiquinol. Required for flavinylation (covalent attachment of FAD) of the flavoprotein subunit sdha of the SDH catalytic dimer. In Danio rerio (Zebrafish), this protein is Succinate dehydrogenase assembly factor 2, mitochondrial.